Consider the following 357-residue polypeptide: 5-hydroxytryptamine receptor 5A (357 aa).

The Extracellular portion of the chain corresponds to 1-36 (MDLPVNLTSFSLSTPSPLETNHSLGKDDLRPSSPLL). Asn-6 and Asn-21 each carry an N-linked (GlcNAc...) asparagine glycan. Residues 37–63 (SVFGVLILTLLGFLVAATFAWNLLVLA) form a helical membrane-spanning segment. The Cytoplasmic portion of the chain corresponds to 64–76 (TILRVRTFHRVPH). The helical transmembrane segment at 77-103 (NLVASMAVSDVLVAALVMPLSLVHELS) threads the bilayer. Residues 104 to 114 (GRRWQLGRRLC) are Extracellular-facing. A disulfide bridge connects residues Cys-114 and Cys-192. The chain crosses the membrane as a helical span at residues 115-137 (QLWIACDVLCCTASIWNVTAIAL). Position 121 (Asp-121) interacts with serotonin. The Cytoplasmic segment spans residues 138–155 (DRYWSITRHMEYTLRTRK). A helical transmembrane segment spans residues 156-176 (CVSNVMIALTWALSAVISLAP). The Extracellular portion of the chain corresponds to 177-198 (LLFGWGETYSEGSEECQVSREP). The chain crosses the membrane as a helical span at residues 199–220 (SYAVFSTVGAFYLPLCVVLFVY). At 221–287 (WKIYKAAKFR…QKEQRAALMV (67 aa)) the chain is on the cytoplasmic side. The chain crosses the membrane as a helical span at residues 288-312 (GILIGVFVLCWIPFFLTELISPLCS). At 313 to 314 (CD) the chain is on the extracellular side. Residues 315-339 (IPAIWKSIFLWLGYSNSFFNPLIYT) form a helical membrane-spanning segment. The Cytoplasmic portion of the chain corresponds to 340-357 (AFNKNYNSAFKNFFSRQH).

This sequence belongs to the G-protein coupled receptor 1 family.

The protein resides in the cell membrane. G-protein coupled receptor for 5-hydroxytryptamine (serotonin), a biogenic hormone that functions as a neurotransmitter, a hormone and a mitogen. Also functions as a receptor for ergot alkaloid derivatives and other psychoactive substances. Ligand binding causes a conformation change that triggers signaling via guanine nucleotide-binding proteins (G proteins) and modulates the activity of downstream effectors. HTR5A is coupled to G(i)/G(o) G alpha proteins and mediates inhibitory neurotransmission: signaling inhibits adenylate cyclase activity and activates a phosphatidylinositol-calcium second messenger system that regulates the release of Ca(2+) ions from intracellular stores. The protein is 5-hydroxytryptamine receptor 5A of Homo sapiens (Human).